A 411-amino-acid polypeptide reads, in one-letter code: Arginine deiminase (411 aa).

The Amidino-cysteine intermediate role is filled by Cys401.

Belongs to the arginine deiminase family.

It is found in the cytoplasm. The enzyme catalyses L-arginine + H2O = L-citrulline + NH4(+). It functions in the pathway amino-acid degradation; L-arginine degradation via ADI pathway; carbamoyl phosphate from L-arginine: step 1/2. The chain is Arginine deiminase from Staphylococcus aureus (strain MRSA252).